A 1031-amino-acid chain; its full sequence is Serine-repeat antigen protein 6 (1031 aa).

The N-terminal stretch at 1-24 is a signal peptide; it reads MICPIFFLYIINVLFTQYFIKCEG. Residue Asn-74 is glycosylated (N-linked (GlcNAc...) asparagine). Residues 91–101 show a composition bias toward low complexity; it reads KVVSSSESGKG. The interval 91 to 163 is disordered; sequence KVVSSSESGK…TESSSETLNK (73 aa). Residues 104 to 139 are compositionally biased toward polar residues; it reads VSHTKVTSEGLSDTQPNVTQSVSSSTHTPGSLDSTM. N-linked (GlcNAc...) asparagine glycosylation is present at Asn-120. Over residues 140 to 158 the composition is skewed to low complexity; the sequence is STEQHSSVSQSSLPTESSS. Asn-449 is a glycosylation site (N-linked (GlcNAc...) asparagine). Positions 490–567 are disordered; sequence TLPSESPSES…GDTNYVYDFD (78 aa). Low complexity predominate over residues 492–505; sequence PSESPSESSSKSDS. The span at 511 to 535 shows a compositional bias: basic and acidic residues; that stretch reads NDKDKNEDKDDMSKNSKEEFKNDDK. Residue Asn-544 is glycosylated (N-linked (GlcNAc...) asparagine). Low complexity predominate over residues 554–564; sequence NINNGDTNYVY. N-linked (GlcNAc...) asparagine glycosylation occurs at Asn-573. The active site involves Cys-644. Asn-674 carries an N-linked (GlcNAc...) asparagine glycan. Residues His-810 and Asn-835 contribute to the active site. N-linked (GlcNAc...) asparagine glycans are attached at residues Asn-929 and Asn-974.

The protein belongs to the peptidase C1 family. Post-translationally, just prior to merozoite egress from host erythrocytes, proteolytically cleaved by SUB1 to generate the active 75kDa form.

The protein resides in the parasitophorous vacuole lumen. The protein localises to the parasitophorous vacuole membrane. Functionally, cysteine protease which plays an essential role in merozoite egress from host erythrocytes. May cleave host SPTB/beta spectrin and ANK1/ankyrin-1 which disrupts host erythrocyte actin cytoskeleton and leads to host erythrocyte cell membrane rupture. This chain is Serine-repeat antigen protein 6, found in Plasmodium falciparum (isolate 3D7).